Here is a 276-residue protein sequence, read N- to C-terminus: GPN-loop GTPase 3 (276 aa).

GTP is bound at residue 13-18 (SSGKST). The Gly-Pro-Asn (GPN)-loop; involved in dimer interface signature appears at 70–72 (GPN). A GTP-binding site is contributed by 173–176 (SKMD). Residues 257–276 (EDQEPKDPDRFEADDLEDDE) are disordered. Residues 259-269 (QEPKDPDRFEA) show a composition bias toward basic and acidic residues.

This sequence belongs to the GPN-loop GTPase family. As to quaternary structure, heterodimers with gpn1 or gpn2. Binds to RNA polymerase II (RNAPII).

Its subcellular location is the cytoplasm. It is found in the nucleus. Its function is as follows. Small GTPase required for proper nuclear import of RNA polymerase II and III (RNAPII and RNAPIII). May act at an RNAP assembly step prior to nuclear import. This chain is GPN-loop GTPase 3, found in Schizosaccharomyces pombe (strain 972 / ATCC 24843) (Fission yeast).